A 189-amino-acid chain; its full sequence is Glycerol-3-phosphate acyltransferase (189 aa).

5 helical membrane passes run 1-21, 50-70, 72-92, 111-131, and 151-171; these read MVWL…AVLL, KLAI…VLVA, WLGL…IGHL, MLLG…LLTF, and LLAW…ALIV.

Belongs to the PlsY family. As to quaternary structure, probably interacts with PlsX.

The protein localises to the cell inner membrane. The catalysed reaction is an acyl phosphate + sn-glycerol 3-phosphate = a 1-acyl-sn-glycero-3-phosphate + phosphate. Its pathway is lipid metabolism; phospholipid metabolism. In terms of biological role, catalyzes the transfer of an acyl group from acyl-phosphate (acyl-PO(4)) to glycerol-3-phosphate (G3P) to form lysophosphatidic acid (LPA). This enzyme utilizes acyl-phosphate as fatty acyl donor, but not acyl-CoA or acyl-ACP. In Pseudomonas paraeruginosa (strain DSM 24068 / PA7) (Pseudomonas aeruginosa (strain PA7)), this protein is Glycerol-3-phosphate acyltransferase.